The following is a 273-amino-acid chain: Glutamate racemase (273 aa).

Substrate is bound by residues 10–11 (DS) and 42–43 (YG). C73 acts as the Proton donor/acceptor in catalysis. 74–75 (NT) is a substrate binding site. C184 serves as the catalytic Proton donor/acceptor. 185–186 (TH) provides a ligand contact to substrate.

It belongs to the aspartate/glutamate racemases family.

It carries out the reaction L-glutamate = D-glutamate. It participates in cell wall biogenesis; peptidoglycan biosynthesis. Functionally, provides the (R)-glutamate required for cell wall biosynthesis. The sequence is that of Glutamate racemase from Desulforudis audaxviator (strain MP104C).